Consider the following 353-residue polypeptide: Photosystem II protein D1 (353 aa).

At T2 the chain carries N-acetylthreonine. T2 is modified (phosphothreonine). The next 3 helical transmembrane spans lie at 29–46 (YIGWFGVLMIPTLLTATS), 118–133 (HFLLGVACYMGREWEL), and 142–156 (WIAVAYSAPVAAATA). H118 lines the chlorophyll a pocket. A pheophytin a-binding site is contributed by Y126. [CaMn4O5] cluster-binding residues include D170 and E189. Residues 197-218 (FHMLGVAGVFGGSLFSAMHGSL) traverse the membrane as a helical segment. H198 is a chlorophyll a binding site. A quinone is bound by residues H215 and 264–265 (SF). H215 contributes to the Fe cation binding site. Fe cation is bound at residue H272. A helical transmembrane segment spans residues 274–288 (FLAAWPVVGIWFTAL). Residues H332, E333, D342, and A344 each coordinate [CaMn4O5] cluster. The propeptide occupies 345-353 (AIEAPATNG).

It belongs to the reaction center PufL/M/PsbA/D family. In terms of assembly, PSII is composed of 1 copy each of membrane proteins PsbA, PsbB, PsbC, PsbD, PsbE, PsbF, PsbH, PsbI, PsbJ, PsbK, PsbL, PsbM, PsbT, PsbX, PsbY, PsbZ, Psb30/Ycf12, at least 3 peripheral proteins of the oxygen-evolving complex and a large number of cofactors. It forms dimeric complexes. It depends on The D1/D2 heterodimer binds P680, chlorophylls that are the primary electron donor of PSII, and subsequent electron acceptors. It shares a non-heme iron and each subunit binds pheophytin, quinone, additional chlorophylls, carotenoids and lipids. D1 provides most of the ligands for the Mn4-Ca-O5 cluster of the oxygen-evolving complex (OEC). There is also a Cl(-1) ion associated with D1 and D2, which is required for oxygen evolution. The PSII complex binds additional chlorophylls, carotenoids and specific lipids. as a cofactor. Tyr-161 forms a radical intermediate that is referred to as redox-active TyrZ, YZ or Y-Z. Post-translationally, C-terminally processed by CTPA; processing is essential to allow assembly of the oxygen-evolving complex and thus photosynthetic growth.

It localises to the plastid membrane. It catalyses the reaction 2 a plastoquinone + 4 hnu + 2 H2O = 2 a plastoquinol + O2. Its function is as follows. Photosystem II (PSII) is a light-driven water:plastoquinone oxidoreductase that uses light energy to abstract electrons from H(2)O, generating O(2) and a proton gradient subsequently used for ATP formation. It consists of a core antenna complex that captures photons, and an electron transfer chain that converts photonic excitation into a charge separation. The D1/D2 (PsbA/PsbD) reaction center heterodimer binds P680, the primary electron donor of PSII as well as several subsequent electron acceptors. In Cuscuta reflexa (Southern Asian dodder), this protein is Photosystem II protein D1.